Reading from the N-terminus, the 171-residue chain is 3-hydroxydecanoyl-[acyl-carrier-protein] dehydratase (171 aa).

Residue H70 is part of the active site.

It belongs to the thioester dehydratase family. FabA subfamily. In terms of assembly, homodimer.

The protein resides in the cytoplasm. The enzyme catalyses a (3R)-hydroxyacyl-[ACP] = a (2E)-enoyl-[ACP] + H2O. It catalyses the reaction (3R)-hydroxydecanoyl-[ACP] = (2E)-decenoyl-[ACP] + H2O. It carries out the reaction (2E)-decenoyl-[ACP] = (3Z)-decenoyl-[ACP]. The protein operates within lipid metabolism; fatty acid biosynthesis. Functionally, necessary for the introduction of cis unsaturation into fatty acids. Catalyzes the dehydration of (3R)-3-hydroxydecanoyl-ACP to E-(2)-decenoyl-ACP and then its isomerization to Z-(3)-decenoyl-ACP. Can catalyze the dehydratase reaction for beta-hydroxyacyl-ACPs with saturated chain lengths up to 16:0, being most active on intermediate chain length. The chain is 3-hydroxydecanoyl-[acyl-carrier-protein] dehydratase from Shewanella woodyi (strain ATCC 51908 / MS32).